The following is a 410-amino-acid chain: Elongation factor Tu (410 aa).

The tr-type G domain occupies 10–214 (KPHVNIGTIG…EVDAYIPTPE (205 aa)). A G1 region spans residues 19-26 (GHVDHGKT). Residue 19–26 (GHVDHGKT) participates in GTP binding. T26 is a Mg(2+) binding site. Positions 60 to 64 (GITIN) are G2. A G3 region spans residues 81 to 84 (DCPG). Residues 81 to 85 (DCPGH) and 136 to 139 (NKED) each bind GTP. The G4 stretch occupies residues 136–139 (NKED). Residues 174 to 176 (SAL) form a G5 region.

The protein belongs to the TRAFAC class translation factor GTPase superfamily. Classic translation factor GTPase family. EF-Tu/EF-1A subfamily. As to quaternary structure, monomer.

It is found in the cytoplasm. It carries out the reaction GTP + H2O = GDP + phosphate + H(+). In terms of biological role, GTP hydrolase that promotes the GTP-dependent binding of aminoacyl-tRNA to the A-site of ribosomes during protein biosynthesis. This is Elongation factor Tu from Gloeothece citriformis (strain PCC 7424) (Cyanothece sp. (strain PCC 7424)).